The chain runs to 500 residues: Probable cytosol aminopeptidase 1 (500 aa).

Positions 263 and 268 each coordinate Mn(2+). Residue Lys-275 is part of the active site. Mn(2+)-binding residues include Asp-287, Asp-346, and Glu-348. The active site involves Arg-350.

Belongs to the peptidase M17 family. It depends on Mn(2+) as a cofactor.

Its subcellular location is the cytoplasm. It carries out the reaction Release of an N-terminal amino acid, Xaa-|-Yaa-, in which Xaa is preferably Leu, but may be other amino acids including Pro although not Arg or Lys, and Yaa may be Pro. Amino acid amides and methyl esters are also readily hydrolyzed, but rates on arylamides are exceedingly low.. The enzyme catalyses Release of an N-terminal amino acid, preferentially leucine, but not glutamic or aspartic acids.. In terms of biological role, presumably involved in the processing and regular turnover of intracellular proteins. Catalyzes the removal of unsubstituted N-terminal amino acids from various peptides. The protein is Probable cytosol aminopeptidase 1 (pepA1) of Shewanella oneidensis (strain ATCC 700550 / JCM 31522 / CIP 106686 / LMG 19005 / NCIMB 14063 / MR-1).